We begin with the raw amino-acid sequence, 610 residues long: Manganese lipoxygenase (610 aa).

Positions 1 to 16 are cleaved as a signal peptide; the sequence is MVALLIFLGIFTCVET. A Lipoxygenase domain is found at 47–610; the sequence is FTLPNEDDEI…PGVIPFYLSV (564 aa). N-linked (GlcNAc...) asparagine glycosylation is found at N157 and N259. H290 and H295 together coordinate Mn(2+). N386 is a glycosylation site (N-linked (GlcNAc...) asparagine). Mn(2+) contacts are provided by H475 and N479. N540 is a glycosylation site (N-linked (GlcNAc...) asparagine). A Mn(2+)-binding site is contributed by V610.

It belongs to the lipoxygenase family. Manganese lipoxygenase subfamily. It depends on Mn(2+) as a cofactor. N- and O-glycosylated.

The protein resides in the secreted. The enzyme catalyses (9Z,12Z)-octadecadienoate + O2 = (11S)-hydroperoxy-(9Z,12Z)-octadecadienoate. The catalysed reaction is (9Z,12Z)-octadecadienoate + O2 = (11R)-hydroperoxy-(9Z,12Z)-octadecadienoate. It carries out the reaction (9Z,12Z)-octadecadienoate + O2 = (13S)-hydroperoxy-(9Z,11E)-octadecadienoate. It catalyses the reaction (9Z,12Z,15Z)-octadecatrienoate + O2 = (11S)-hydroperoxy-(9Z,12Z,15Z)-octadecatrienoate. Lipoxygenase that metabolizes linoleic and alpha-linolenic acids to 9-, 11- and 13-hydroperoxy fatty acids. Oxidizes linoleic acid to mainly 11R-, 13S- and racemic 9-HPODE, and alpha-linolenic acid to 11-HPOTrE. In Fusarium oxysporum (strain Fo5176) (Fusarium vascular wilt), this protein is Manganese lipoxygenase.